Here is a 358-residue protein sequence, read N- to C-terminus: 4-hydroxy-2-oxovalerate aldolase 2 (358 aa).

The Pyruvate carboxyltransferase domain maps to 16–268 (VLLHDMCLRD…ETGVDLFKLM (253 aa)). Residue 24–25 (RD) coordinates substrate. Asp25 contributes to the Mn(2+) binding site. The active-site Proton acceptor is His28. Residues Ser178 and His207 each contribute to the substrate site. 2 residues coordinate Mn(2+): His207 and His209. Tyr298 serves as a coordination point for substrate.

Belongs to the 4-hydroxy-2-oxovalerate aldolase family.

It carries out the reaction (S)-4-hydroxy-2-oxopentanoate = acetaldehyde + pyruvate. This Methylibium petroleiphilum (strain ATCC BAA-1232 / LMG 22953 / PM1) protein is 4-hydroxy-2-oxovalerate aldolase 2.